Reading from the N-terminus, the 255-residue chain is Taurine import ATP-binding protein TauB (255 aa).

Residues 2-229 (LQISHLYADY…RFVAGESSRS (228 aa)) enclose the ABC transporter domain. Residue 34 to 41 (GPSGCGKT) coordinates ATP.

The protein belongs to the ABC transporter superfamily. Taurine importer (TC 3.A.1.17.1) family. In terms of assembly, the complex is composed of two ATP-binding proteins (TauB), two transmembrane proteins (TauC) and a solute-binding protein (TauA).

Its subcellular location is the cell inner membrane. The catalysed reaction is taurine(out) + ATP + H2O = taurine(in) + ADP + phosphate + H(+). Functionally, part of the ABC transporter complex TauABC involved in taurine import. Responsible for energy coupling to the transport system. This Shigella boydii serotype 4 (strain Sb227) protein is Taurine import ATP-binding protein TauB.